We begin with the raw amino-acid sequence, 247 residues long: Homeobox-leucine zipper protein HOX17 (247 aa).

The disordered stretch occupies residues 58 to 81 (ERAGLRGGGGSDEEDGGCGIDGSR). Positions 79-138 (GSRKKLRLSKDQSAVLEDSFREHPTLNPRQKATLAQQLGLRPRQVEVWFQNRRARTKLKQ) form a DNA-binding region, homeobox. Positions 137–182 (KQTEVDCEFLKRCCETLTEENRRLQKEVQELRALKLVSPHLYMNMS) are leucine-zipper.

The protein belongs to the HD-ZIP homeobox family. Class II subfamily. Expressed in seedlings, roots, stems, leaf sheaths and blades and panicles.

The protein localises to the nucleus. Probable transcription factor. This Oryza sativa subsp. japonica (Rice) protein is Homeobox-leucine zipper protein HOX17 (HOX17).